The chain runs to 100 residues: Integration host factor subunit alpha (100 aa).

It belongs to the bacterial histone-like protein family. Heterodimer of an alpha and a beta chain.

Its function is as follows. This protein is one of the two subunits of integration host factor, a specific DNA-binding protein that functions in genetic recombination as well as in transcriptional and translational control. Involved in hydrogenase gene expression. In Rhodobacter capsulatus (Rhodopseudomonas capsulata), this protein is Integration host factor subunit alpha (ihfA).